The primary structure comprises 841 residues: Follistatin-related protein 4 (841 aa).

An N-terminal signal peptide occupies residues 1-22 (MKPGGFWPHLALLGVSLPAVLG). Residues 29–54 (SRSPNMVPGESQAEETRGFEVTRREG) form a disordered region. The span at 42-54 (EETRGFEVTRREG) shows a compositional bias: basic and acidic residues. In terms of domain architecture, Kazal-like spans 80–134 (TTGQPSCQCLEVCRPRYMPVCGSDGRLYGNHCELRRAACLLGKRIVSVHSKDCFL). 3 disulfides stabilise this stretch: Cys-86–Cys-118, Cys-92–Cys-111, and Cys-100–Cys-132. EF-hand domains follow at residues 173-208 (QKRLLVESLFKDLDADGNGHLGSLELAQYVLKEQDM) and 225-247 (DYNSDGSLTLGEFYTAFQVIQLS). Ca(2+) is bound by residues Asp-186, Asp-188, Asn-190, His-192, Glu-197, Asp-225, Asn-227, Asp-229, Ser-231, and Glu-236. Ig-like domains are found at residues 250–336 (PEDK…VLQV) and 340–425 (PVIR…EDIS). Intrachain disulfides connect Cys-269/Cys-320 and Cys-361/Cys-412. N-linked (GlcNAc...) asparagine glycosylation is present at Asn-317.

The protein resides in the secreted. The sequence is that of Follistatin-related protein 4 (Fstl4) from Mus musculus (Mouse).